Here is a 78-residue protein sequence, read N- to C-terminus: Small ribosomal subunit protein bS18 (78 aa).

It belongs to the bacterial ribosomal protein bS18 family. In terms of assembly, part of the 30S ribosomal subunit. Forms a tight heterodimer with protein bS6.

In terms of biological role, binds as a heterodimer with protein bS6 to the central domain of the 16S rRNA, where it helps stabilize the platform of the 30S subunit. The sequence is that of Small ribosomal subunit protein bS18 from Pseudothermotoga lettingae (strain ATCC BAA-301 / DSM 14385 / NBRC 107922 / TMO) (Thermotoga lettingae).